The following is a 513-amino-acid chain: ATP synthase subunit alpha (513 aa).

169–176 serves as a coordination point for ATP; it reads GDRQTGKT.

Belongs to the ATPase alpha/beta chains family. As to quaternary structure, F-type ATPases have 2 components, CF(1) - the catalytic core - and CF(0) - the membrane proton channel. CF(1) has five subunits: alpha(3), beta(3), gamma(1), delta(1), epsilon(1). CF(0) has three main subunits: a(1), b(2) and c(9-12). The alpha and beta chains form an alternating ring which encloses part of the gamma chain. CF(1) is attached to CF(0) by a central stalk formed by the gamma and epsilon chains, while a peripheral stalk is formed by the delta and b chains.

It is found in the cell inner membrane. The enzyme catalyses ATP + H2O + 4 H(+)(in) = ADP + phosphate + 5 H(+)(out). Its function is as follows. Produces ATP from ADP in the presence of a proton gradient across the membrane. The alpha chain is a regulatory subunit. The protein is ATP synthase subunit alpha of Hydrogenovibrio crunogenus (strain DSM 25203 / XCL-2) (Thiomicrospira crunogena).